The primary structure comprises 554 residues: (E)-beta-caryophyllene synthase (554 aa).

Positions 313 and 317 each coordinate Mn(2+). Residues 313–317 (DDIYD) carry the DDXXD motif motif. Homodimerization regions lie at residues 319–325 (YGTLDEL) and 391–427 (EAQW…LAVI). Residues Asp457 and Glu465 each contribute to the Mn(2+) site.

This sequence belongs to the terpene synthase family. In terms of assembly, homodimer. Requires Mn(2+) as cofactor. Mg(2+) is required as a cofactor. In terms of tissue distribution, expressed in peltate glandular trichomes. Present at low levels in flowers, leaves and stems.

It catalyses the reaction (2E,6E)-farnesyl diphosphate = (-)-(E)-beta-caryophyllene + diphosphate. It carries out the reaction (2E,6E)-farnesyl diphosphate = alpha-humulene + diphosphate. It functions in the pathway secondary metabolite biosynthesis; terpenoid biosynthesis. Involved in the biosynthesis of phenolic sesquiterpenes natural products. Sesquiterpene synthase converting (2E,6E)-farnesyl diphosphate (FPP) to (E)-beta-caryophyllene and alpha-humulene. The protein is (E)-beta-caryophyllene synthase of Origanum vulgare (Wild marjoram).